The sequence spans 97 residues: Large ribosomal subunit protein bL36m (97 aa).

It belongs to the bacterial ribosomal protein bL36 family. As to quaternary structure, component of the mitochondrial ribosome large subunit (39S) which comprises a 16S rRNA and about 50 distinct proteins.

The protein localises to the mitochondrion. The polypeptide is Large ribosomal subunit protein bL36m (Mrpl36) (Rattus norvegicus (Rat)).